The chain runs to 447 residues: Dihydroorotase (447 aa).

Zn(2+) contacts are provided by His-81 and His-83. Substrate is bound by residues 83–85 (HFR) and Asn-115. Residues Asp-171, His-198, and His-252 each coordinate Zn(2+). Asn-298 is a binding site for substrate. Asp-325 is a binding site for Zn(2+). Residue Asp-325 is part of the active site. Substrate contacts are provided by residues His-329 and 343-344 (FG).

It belongs to the metallo-dependent hydrolases superfamily. DHOase family. Class I DHOase subfamily. Zn(2+) serves as cofactor.

The catalysed reaction is (S)-dihydroorotate + H2O = N-carbamoyl-L-aspartate + H(+). It functions in the pathway pyrimidine metabolism; UMP biosynthesis via de novo pathway; (S)-dihydroorotate from bicarbonate: step 3/3. Functionally, catalyzes the reversible cyclization of carbamoyl aspartate to dihydroorotate. This is Dihydroorotase from Ehrlichia canis (strain Jake).